The sequence spans 203 residues: Endoplasmic reticulum transmembrane protein 3 (203 aa).

Residues 1-6 are Lumenal-facing; sequence MSLYYT. Residues 7-27 form a helical membrane-spanning segment; that stretch reads LVFAILVVEIFMFSILALPIP. At 28 to 45 the chain is on the cytoplasmic side; that stretch reads SRYRRPLTLLLLKPFKSS. The helical transmembrane segment at 46–66 threads the bilayer; it reads TVQVAIKCVLGFILLLFIDCI. The Lumenal portion of the chain corresponds to 67-110; it reads NRVYSIDKELQLSSASQNNGAIIAQDRIEVLSRKFFAQRNMYLT. The chain crosses the membrane as a helical span at residues 111–131; sequence GITLFLTFVVVRTFGLVIELL. Over 132-203 the chain is Cytoplasmic; sequence TMKDIYRASP…KSESLQEEIN (72 aa). A disordered region spans residues 142-171; it reads PVASSDVKKNDSVTAEAAAQSGASKDDHGD.

The protein belongs to the BCAP29/BCAP31 family.

The protein localises to the endoplasmic reticulum membrane. Functionally, may play a role in anterograde transport of membrane proteins from the endoplasmic reticulum to the Golgi. May be involved in invertase secretion. The protein is Endoplasmic reticulum transmembrane protein 3 (YET3) of Saccharomyces cerevisiae (strain ATCC 204508 / S288c) (Baker's yeast).